Here is a 1162-residue protein sequence, read N- to C-terminus: ATP-dependent helicase/deoxyribonuclease subunit B (1162 aa).

A UvrD-like helicase ATP-binding domain is found at 1–275; sequence MELNAYIGRA…QFFKQQYRFN (275 aa). 8–15 provides a ligand contact to ATP; it reads GRAGTGKS. The 315-residue stretch at 269–583 folds into the UvrD-like helicase C-terminal domain; the sequence is KQQYRFNNKD…SIGTMDLAKV (315 aa). [4Fe-4S] cluster is bound by residues C784, C1117, C1120, and C1126.

This sequence belongs to the helicase family. AddB/RexB type 1 subfamily. As to quaternary structure, heterodimer of AddA and AddB. The cofactor is Mg(2+). Requires [4Fe-4S] cluster as cofactor.

The heterodimer acts as both an ATP-dependent DNA helicase and an ATP-dependent, dual-direction single-stranded exonuclease. Recognizes the chi site generating a DNA molecule suitable for the initiation of homologous recombination. The AddB subunit has 5' -&gt; 3' nuclease activity but not helicase activity. This is ATP-dependent helicase/deoxyribonuclease subunit B from Staphylococcus haemolyticus (strain JCSC1435).